An 800-amino-acid chain; its full sequence is MANILKKLYNADKRELKRFEKIADQVESYADQMAALSDEELQAKTPEFRSRIEKGESLDDLLPEAFAVSREASKRVLGLYPFRVQILGGIALHRGNIAEMMTGEGKTLTATMPVYLNALSGKGVHVVTVNEYLSSRDETEMGQLYRWLGLTVGLNVSTMSPEEKRKAYACDVTYSTNSELGFDYLRDNMVVYKEQMVQRPLNYAIIDEVDSILIDEARTPLIISGEAEQANADYVRADRFVKKLVEDKSDNDADDDEDHGDYKIDWPTKTISLTRTGIQKACDHFGLKNLYDVENQKLVHHIDQALRANYIMLKDIDYVVQDGEVLIVDSFTGRVMEGRRFSDGLHQAIEAKEGVKIQEESQTQATITYQNYFRMYQKLSGMTGTAKTEEEEFREIYNMEVITIPTNRPVIRQDMPDLLYPTLDSKFKAVVDEIKERHAKGQPILVGTVSIESSERLSHMLDKEHIPHAVLNAKNHAKEAAIIMNAGQRGAVTIATNMAGRGTDIKLGPGVKELGGLAVIGTERHESRRIDNQLRGRSGRQGDPGYTRFYLSLEDDLMKRFGGDRVKDFLDRLSDNDDDKVIESRLITRQVESAQKRVEGNNYDTRKQTLQYDDVMRIQREIIYKERMQVIDEQQSLKSVLMPMIHRTIDHQVDMFTQGDRSTWRLDSLRDFIVSSLASEEYVDSEIDFKTFTPDALKQQLYQLVEDNYQEKEAALADPEQMLEFEKVVILRVVDEHWTNHIDAMDQLRQSIGLRGYGQLNPLVEYQDSGYNMFEEMISDIEFDVTRLFMKAQIRNNLSR.

ATP contacts are provided by residues Gln-85, 103 to 107, and Asp-504; that span reads GEGKT.

It belongs to the SecA family. As to quaternary structure, monomer and homodimer. Part of the essential Sec protein translocation apparatus which comprises SecA, SecYEG and auxiliary proteins SecDF. Other proteins may also be involved.

It is found in the cell membrane. Its subcellular location is the cytoplasm. It catalyses the reaction ATP + H2O + cellular proteinSide 1 = ADP + phosphate + cellular proteinSide 2.. Functionally, part of the Sec protein translocase complex. Interacts with the SecYEG preprotein conducting channel. Has a central role in coupling the hydrolysis of ATP to the transfer of proteins into and across the cell membrane, serving as an ATP-driven molecular motor driving the stepwise translocation of polypeptide chains across the membrane. This is Protein translocase subunit SecA from Lactobacillus delbrueckii subsp. bulgaricus (strain ATCC 11842 / DSM 20081 / BCRC 10696 / JCM 1002 / NBRC 13953 / NCIMB 11778 / NCTC 12712 / WDCM 00102 / Lb 14).